The chain runs to 279 residues: Pantothenate synthetase (279 aa).

26 to 33 (MGNLHEGH) serves as a coordination point for ATP. His-33 functions as the Proton donor in the catalytic mechanism. Gln-57 provides a ligand contact to (R)-pantoate. Gln-57 serves as a coordination point for beta-alanine. 144–147 (GKKD) provides a ligand contact to ATP. Gln-150 is a binding site for (R)-pantoate. ATP-binding positions include Val-173 and 181 to 184 (LSSR).

This sequence belongs to the pantothenate synthetase family. Homodimer.

Its subcellular location is the cytoplasm. The enzyme catalyses (R)-pantoate + beta-alanine + ATP = (R)-pantothenate + AMP + diphosphate + H(+). The protein operates within cofactor biosynthesis; (R)-pantothenate biosynthesis; (R)-pantothenate from (R)-pantoate and beta-alanine: step 1/1. Functionally, catalyzes the condensation of pantoate with beta-alanine in an ATP-dependent reaction via a pantoyl-adenylate intermediate. The chain is Pantothenate synthetase from Burkholderia lata (strain ATCC 17760 / DSM 23089 / LMG 22485 / NCIMB 9086 / R18194 / 383).